We begin with the raw amino-acid sequence, 265 residues long: Translation initiation factor 2 subunit alpha (265 aa).

The region spanning 12 to 83 (GELIIGTVYK…KKGHVDASLK (72 aa)) is the S1 motif domain.

Belongs to the eIF-2-alpha family. As to quaternary structure, heterotrimer composed of an alpha, a beta and a gamma chain.

EIF-2 functions in the early steps of protein synthesis by forming a ternary complex with GTP and initiator tRNA. This chain is Translation initiation factor 2 subunit alpha, found in Methanobrevibacter smithii (strain ATCC 35061 / DSM 861 / OCM 144 / PS).